Consider the following 441-residue polypeptide: COBRA-like protein 2 (441 aa).

An N-terminal signal peptide occupies residues 1-28; sequence MNILFSRFSFLLLFLCSWTSFTFTTTEA. N-linked (GlcNAc...) asparagine glycosylation is found at N37, N162, N170, N209, N234, N249, N314, N329, and N348. N417 carries GPI-anchor amidated asparagine lipidation. Positions 418 to 441 are cleaved as a propeptide — removed in mature form; the sequence is ASPNIATSPFVILLITFLSVLILM.

The protein belongs to the COBRA family. As to expression, expressed in roots, stems, leaves, flowers and siliques.

It is found in the cell membrane. The sequence is that of COBRA-like protein 2 (COBL2) from Arabidopsis thaliana (Mouse-ear cress).